The primary structure comprises 1171 residues: MASSISRNGGFCGALQRAPPPMPPGLARRLSSRECYGVGKVKVMLRVSDRAPDKDSPLDPEFMALDKKKRQVTLTDPRNVCPPPQAAQERGPMVAAPKMFAFDNLFTAEDKQSDVCASALSEVIPAVLEGSDGCLLAMGYPSTGQPHTVLGGDVATGAGAGAATGTGTGTGSVAACSLGAAPCAIAWLYKGIQERRQKSGARFSVRVSAVGVSATKPDALSTDLLISHAAESDDSPGIYLRDDFLGGPTELRAPTAERAALFLDSALAGRLKSSGSTSTPAGGGPAPLESALIFTLHVYQYSLSRKGGVAGGRSRLHIIDLGGCANRSGGLPLSGIGNILLAILSGQRHPPHKDHPLTPLLKDCLAPITCHVAIVAHVLHEQSYQDALSTIQIASRIHRLRRRKHRVPMPLAVGLAQGLSGGGGSSAGSGADPSSSEISADTVIYMGPNDDATDGEHPPVYLPSLSAGDNRAIMSKALKGSGLEKPPTQMKAGLSSPMMMKKAMAAAGEKVKKLPGNSPMGSLKRQAAAGACSSPLVPHEQQQQQQQIAHGSPIPIPRHMVSKGSNVPSPKGSPLRRAHAGAHPGAALEQLEAGMRKITEEQWIDGPRVSRAKVAEARHLMREVNHVKQCETWVDGPKSLSCRSLTAGNLPAAGAQTQGYGFMDSHKKTMIRQWVETQTSQVFQSPATVSASNSPTALHWKLSQLKQKSLDLPERPAFPPEQQSMDLPQQCFESQPLLGQDMSLPPDGDEDQDSGPSEVPPALPLFDDPLGSRDISHDSLHRMLSRHVSREQLHEADLVASRASSSHHQHQHHRPSSQRSIDCGLQVTEEEIARTMAREQEHSMHPLSALSHCDNLSFVSSFNMACESFSECGERARHQFDQLARLHEIFTSQLAMAEVTPSAALFRTDVSSVFSEPVFRFNVGQSSVCSEPAYRLTPSPPKQPSHSPSQGSLPSLNGIMEIAGMDDYALLRQPDGASDPSLPKSEKRFAPQHDDICELDEKAMAAAVGKRNSLEDAQHKLNEITNILPLAAQSRLPLLPLNTSSEAYDSGHDSNSTPRTSKHSGISRRAESGYHSVATVRDSDESSFASGMSKGQRHRITISGGGGGGCGAGGGGSATGNYQRHSHGVGGHKKHRHRHEGNGGGNKGLCNWLLTPFSCTYPETEGEISDF.

Residues 1–24 (MASSISRNGGFCGALQRAPPPMPP) form a disordered region. The region spanning 40–400 (KVKVMLRVSD…IQIASRIHRL (361 aa)) is the Kinesin motor domain. Disordered stretches follow at residues 737-774 (LLGQ…GSRD), 798-820 (LVAS…SQRS), 932-955 (PAYR…SLPS), 1043-1099 (TSSE…QRHR), and 1124-1143 (RHSH…EGNG). The span at 805 to 816 (SSHHQHQHHRPS) shows a compositional bias: basic residues. Over residues 1043 to 1059 (TSSEAYDSGHDSNSTPR) the composition is skewed to polar residues. Residues 1124 to 1139 (RHSHGVGGHKKHRHRH) show a composition bias toward basic residues.

This sequence belongs to the TRAFAC class myosin-kinesin ATPase superfamily. Kinesin family. KIF26 subfamily.

The protein resides in the cytoplasm. It localises to the cytoskeleton. The sequence is that of Kinesin-like protein GA13060 from Drosophila pseudoobscura pseudoobscura (Fruit fly).